A 104-amino-acid polypeptide reads, in one-letter code: Phosphoribosyl-ATP pyrophosphatase (104 aa).

It belongs to the PRA-PH family.

It localises to the cytoplasm. It catalyses the reaction 1-(5-phospho-beta-D-ribosyl)-ATP + H2O = 1-(5-phospho-beta-D-ribosyl)-5'-AMP + diphosphate + H(+). Its pathway is amino-acid biosynthesis; L-histidine biosynthesis; L-histidine from 5-phospho-alpha-D-ribose 1-diphosphate: step 2/9. This is Phosphoribosyl-ATP pyrophosphatase from Methanocorpusculum labreanum (strain ATCC 43576 / DSM 4855 / Z).